The primary structure comprises 647 residues: Knirps-related protein (647 aa).

Positions 11-87 (NQTCKVCGEP…VGMSKSGSRY (77 aa)) form a DNA-binding region, nuclear receptor. 2 NR C4-type zinc fingers span residues 14–34 (CKVC…CEGC) and 51–75 (CKNN…LKKC). 4 disordered regions span residues 111-142 (MAAH…KGMS), 196-274 (HKHP…LSPF), 340-383 (GAGQ…LLTN), and 402-600 (SQQQ…NSIL). Residues 120-134 (AGGGSSGGSGGGQGM) show a composition bias toward gly residues. Low complexity-rich tracts occupy residues 200–223 (VVAS…VSSV) and 232–247 (GGKS…ADGS). The span at 248–260 (HSGGGGGGGGGVT) shows a compositional bias: gly residues. 2 stretches are compositionally biased toward polar residues: residues 370 to 381 (SPSTHANNNHLL) and 420 to 432 (DYSI…PNSE). Basic and acidic residues-rich tracts occupy residues 433 to 443 (SGRERVKSRQN) and 480 to 491 (QEERTPAGEDPR). The segment covering 502–519 (LSMKTTGSSLSSKSSSPE) has biased composition (low complexity). Positions 520 to 541 (IEPETEISSDVEKNDTDDDDED) are enriched in acidic residues. Residues 542-556 (LKVTPEEEISVRETA) show a composition bias toward basic and acidic residues. A compositionally biased stretch (polar residues) spans 567–579 (TTETAKTSIENTH). A compositionally biased stretch (low complexity) spans 580-599 (NNNNSISNNNNNNNNNNNSI).

This sequence belongs to the nuclear hormone receptor family. NR0 subfamily.

Its subcellular location is the nucleus. In Drosophila melanogaster (Fruit fly), this protein is Knirps-related protein (knrl).